We begin with the raw amino-acid sequence, 503 residues long: UDP-N-acetylmuramoyl-L-alanyl-D-glutamate--2,6-diaminopimelate ligase (503 aa).

A UDP-N-acetyl-alpha-D-muramoyl-L-alanyl-D-glutamate-binding site is contributed by Ser32. 117–123 (GTNGKTT) provides a ligand contact to ATP. UDP-N-acetyl-alpha-D-muramoyl-L-alanyl-D-glutamate is bound by residues 159–160 (TT), Ser186, Gln192, and Arg194. Residue Lys226 is modified to N6-carboxylysine. Residues Arg396, 420 to 423 (DNPR), Gly471, and Glu475 contribute to the meso-2,6-diaminopimelate site. The short motif at 420 to 423 (DNPR) is the Meso-diaminopimelate recognition motif element.

The protein belongs to the MurCDEF family. MurE subfamily. Mg(2+) is required as a cofactor. Post-translationally, carboxylation is probably crucial for Mg(2+) binding and, consequently, for the gamma-phosphate positioning of ATP.

It is found in the cytoplasm. The enzyme catalyses UDP-N-acetyl-alpha-D-muramoyl-L-alanyl-D-glutamate + meso-2,6-diaminopimelate + ATP = UDP-N-acetyl-alpha-D-muramoyl-L-alanyl-gamma-D-glutamyl-meso-2,6-diaminopimelate + ADP + phosphate + H(+). The protein operates within cell wall biogenesis; peptidoglycan biosynthesis. Functionally, catalyzes the addition of meso-diaminopimelic acid to the nucleotide precursor UDP-N-acetylmuramoyl-L-alanyl-D-glutamate (UMAG) in the biosynthesis of bacterial cell-wall peptidoglycan. The polypeptide is UDP-N-acetylmuramoyl-L-alanyl-D-glutamate--2,6-diaminopimelate ligase (Prochlorococcus marinus (strain SARG / CCMP1375 / SS120)).